A 100-amino-acid chain; its full sequence is Small ribosomal subunit protein uS14 (100 aa).

Belongs to the universal ribosomal protein uS14 family. In terms of assembly, part of the 30S ribosomal subunit. Contacts proteins S3 and S10.

Functionally, binds 16S rRNA, required for the assembly of 30S particles and may also be responsible for determining the conformation of the 16S rRNA at the A site. The chain is Small ribosomal subunit protein uS14 from Prochlorococcus marinus (strain MIT 9301).